We begin with the raw amino-acid sequence, 535 residues long: Bifunctional purine biosynthesis protein PurH (535 aa).

The MGS-like domain occupies 6–151 (TRLPIRRALI…KNHKDVAIVV (146 aa)).

The protein belongs to the PurH family.

The enzyme catalyses (6R)-10-formyltetrahydrofolate + 5-amino-1-(5-phospho-beta-D-ribosyl)imidazole-4-carboxamide = 5-formamido-1-(5-phospho-D-ribosyl)imidazole-4-carboxamide + (6S)-5,6,7,8-tetrahydrofolate. It catalyses the reaction IMP + H2O = 5-formamido-1-(5-phospho-D-ribosyl)imidazole-4-carboxamide. Its pathway is purine metabolism; IMP biosynthesis via de novo pathway; 5-formamido-1-(5-phospho-D-ribosyl)imidazole-4-carboxamide from 5-amino-1-(5-phospho-D-ribosyl)imidazole-4-carboxamide (10-formyl THF route): step 1/1. It functions in the pathway purine metabolism; IMP biosynthesis via de novo pathway; IMP from 5-formamido-1-(5-phospho-D-ribosyl)imidazole-4-carboxamide: step 1/1. In Pseudomonas aeruginosa (strain LESB58), this protein is Bifunctional purine biosynthesis protein PurH.